The chain runs to 341 residues: S-adenosylmethionine:tRNA ribosyltransferase-isomerase (341 aa).

Belongs to the QueA family. As to quaternary structure, monomer.

Its subcellular location is the cytoplasm. It carries out the reaction 7-aminomethyl-7-carbaguanosine(34) in tRNA + S-adenosyl-L-methionine = epoxyqueuosine(34) in tRNA + adenine + L-methionine + 2 H(+). It functions in the pathway tRNA modification; tRNA-queuosine biosynthesis. Transfers and isomerizes the ribose moiety from AdoMet to the 7-aminomethyl group of 7-deazaguanine (preQ1-tRNA) to give epoxyqueuosine (oQ-tRNA). The protein is S-adenosylmethionine:tRNA ribosyltransferase-isomerase of Clostridium beijerinckii (strain ATCC 51743 / NCIMB 8052) (Clostridium acetobutylicum).